Here is a 233-residue protein sequence, read N- to C-terminus: Small ribosomal subunit protein uS3 (233 aa).

A KH type-2 domain is found at Val-39 to Arg-107.

It belongs to the universal ribosomal protein uS3 family. Part of the 30S ribosomal subunit. Forms a tight complex with proteins S10 and S14.

Functionally, binds the lower part of the 30S subunit head. Binds mRNA in the 70S ribosome, positioning it for translation. The polypeptide is Small ribosomal subunit protein uS3 (Cronobacter sakazakii (strain ATCC BAA-894) (Enterobacter sakazakii)).